The primary structure comprises 366 residues: Ribosomal RNA large subunit methyltransferase M (366 aa).

S-adenosyl-L-methionine contacts are provided by residues serine 188, 221–224 (CPGG), aspartate 240, aspartate 260, and aspartate 277. Lysine 306 serves as the catalytic Proton acceptor.

It belongs to the class I-like SAM-binding methyltransferase superfamily. RNA methyltransferase RlmE family. RlmM subfamily. In terms of assembly, monomer.

It is found in the cytoplasm. The enzyme catalyses cytidine(2498) in 23S rRNA + S-adenosyl-L-methionine = 2'-O-methylcytidine(2498) in 23S rRNA + S-adenosyl-L-homocysteine + H(+). Its function is as follows. Catalyzes the 2'-O-methylation at nucleotide C2498 in 23S rRNA. The polypeptide is Ribosomal RNA large subunit methyltransferase M (Shigella boydii serotype 4 (strain Sb227)).